The following is a 748-amino-acid chain: MLRAKNQLFLLSPHYLKQLNIPSASRWKRLLHQQQPLHPEWAVLAKKQLKGKNPEDLIWHTPEGISIKPLYSRADTLDLPEELPGVKPFTRGPYPTMYTYRPWTIRQYAGFSTVEESNKFYKDNIKAGQQGLSVAFDLATHRGYDSDNPRVRGDVGMAGVAIDTVEDTKILFDGIPLEKMSVSMTMNGAVIPVLATFIVTGEEQGVPKEKLTGTIQNDILKEFMVRNTYIFPPEPSMKIIADIFQYTAQHMPKFNSISISGYHMQEAGADAILELAYTIADGLEYCRTGLQAGLTIDEFAPRLSFFWGIGMNFYMEIAKMRAGRRLWAHLIEKMFQPKNSKSLLLRAHCQTSGWSLTEQDPYNNIVRTAIEAMAAVFGGTQSLHTNSFDEALGLPTVKSARIARNTQIIIQEESGIPKVADPWGGSYMMESLTNDVYEAALKLIYEVEEMGGMAKAVAEGIPKLRIEECAARRQARIDSGSEVIVGVNKYQLEKEDSVEVLAIDNTSVRKKQIEKLKKIKSSRDQALAEQCLSALTQCAASGDGNILALAVDAARARCTVGEITDALKKVFGEHKANDRMVSGAYRQEFGESKEITSAIKRVNKFMEREGRRPRLLVAKMGQDGHDRGAKVIATGFADLGFDVDIGPLFQTPREVAQQAVDADVHAVGVSTLAAGHKTLVPELIKELTALGRPDILVMCGGVIPPQDYEFLYEVGVSNVFGPGTRIPRAAVQVLDDIEKCLAEKQQSV.

Residues 1-30 (MLRAKNQLFLLSPHYLKQLNIPSASRWKRL) constitute a mitochondrion transit peptide. Glutamine 48 contributes to the malonyl-CoA binding site. The residue at position 87 (lysine 87) is an N6-acetyllysine. Residues 94-97 (YPTM) and 104-108 (TIRQY) each bind malonyl-CoA. Lysine 210 is subject to N6-acetyllysine. Malonyl-CoA is bound by residues 214-216 (TIQ), arginine 226, lysine 253, histidine 263, and 302-304 (RLS). Lysine 333 carries the N6-acetyllysine modification. Position 341 is an N6-succinyllysine (lysine 341). The residue at position 479 (serine 479) is a Phosphoserine. Lysine 593 carries the post-translational modification N6-succinyllysine. Lysine 600 is subject to N6-acetyllysine. Residues 612–744 (RPRLLVAKMG…DDIEKCLAEK (133 aa)) form the B12-binding domain. Histidine 625 lines the adenosylcob(III)alamin pocket.

The protein belongs to the methylmalonyl-CoA mutase family. In terms of assembly, homodimer. Interacts (the apoenzyme form) with MMAA; the interaction is GTP dependent. It depends on adenosylcob(III)alamin as a cofactor.

It is found in the mitochondrion matrix. The protein resides in the mitochondrion. Its subcellular location is the cytoplasm. The enzyme catalyses (R)-methylmalonyl-CoA = succinyl-CoA. Its activity is regulated as follows. Inhibited by itaconyl-CoA, a metabolite that inactivates the coenzyme B12 cofactor. Catalyzes the reversible isomerization of methylmalonyl-CoA (MMCoA) (generated from branched-chain amino acid metabolism and degradation of dietary odd chain fatty acids and cholesterol) to succinyl-CoA (3-carboxypropionyl-CoA), a key intermediate of the tricarboxylic acid cycle. This Mus musculus (Mouse) protein is Methylmalonyl-CoA mutase, mitochondrial (Mmut).